The sequence spans 68 residues: Large ribosomal subunit protein bL35 (68 aa).

Basic residues-rich tracts occupy residues 1 to 11 and 19 to 29; these read MPKLKTRSSAK and SGKVKHGKAFA. Residues 1–54 are disordered; that stretch reads MPKLKTRSSAKKRFDVKKSGKVKHGKAFAKHLFTFSKTPKSKRSNRGTGHLRDM.

It belongs to the bacterial ribosomal protein bL35 family.

This Myxococcus xanthus (strain DK1622) protein is Large ribosomal subunit protein bL35.